The following is a 117-amino-acid chain: Large ribosomal subunit protein bL20c (117 aa).

Belongs to the bacterial ribosomal protein bL20 family.

The protein localises to the plastid. The protein resides in the chloroplast. Functionally, binds directly to 23S ribosomal RNA and is necessary for the in vitro assembly process of the 50S ribosomal subunit. It is not involved in the protein synthesizing functions of that subunit. This is Large ribosomal subunit protein bL20c from Lobularia maritima (Sweet alyssum).